Reading from the N-terminus, the 630-residue chain is Terpinolene synthase, chloroplastic (630 aa).

A chloroplast-targeting transit peptide spans 1–52; sequence MALVSILPLSSKSVLHKSWIVSTYEHKAISRTIPNLGLRGRGKSVTHSLRMS. Mg(2+) is bound by residues D381, D385, N525, and D533. The DDXXD motif motif lies at 381 to 385; that stretch reads DDIYD.

This sequence belongs to the terpene synthase family. Tpsd subfamily. Requires Mg(2+) as cofactor. Mn(2+) is required as a cofactor. K(+) serves as cofactor.

The protein resides in the plastid. The protein localises to the chloroplast. The enzyme catalyses (2E)-geranyl diphosphate = terpinolene + diphosphate. It functions in the pathway terpene metabolism; oleoresin biosynthesis. Functionally, involved in defensive oleoresin formation in conifers in response to insect attack or other injury. Involved in monoterpene (C10) olefins biosynthesis. This Abies grandis (Grand fir) protein is Terpinolene synthase, chloroplastic (ag9).